Consider the following 595-residue polypeptide: DNA primase (595 aa).

A CHC2-type zinc finger spans residues 38 to 62 (CPFHQEKTPSFTVSDSKRFFYCFGC). The 83-residue stretch at 250-332 (NHSILVEGYF…EKKISFIRLP (83 aa)) folds into the Toprim domain. Mg(2+)-binding residues include E256, D300, and D302.

The protein belongs to the DnaG primase family. Monomer. Interacts with DnaB. Zn(2+) is required as a cofactor. Requires Mg(2+) as cofactor.

It carries out the reaction ssDNA + n NTP = ssDNA/pppN(pN)n-1 hybrid + (n-1) diphosphate.. RNA polymerase that catalyzes the synthesis of short RNA molecules used as primers for DNA polymerase during DNA replication. In Rickettsia felis (strain ATCC VR-1525 / URRWXCal2) (Rickettsia azadi), this protein is DNA primase.